The sequence spans 273 residues: MLLPDWLNALILGLVEGLTEFLPVSSTGHLILVGELLKFNDDRGKLFEVVIQSGAILAVCWEYRRKLVELLFGLGHSRQARRFVLNLIIAFLPAGIVGFLAGKAIKAHLFNSTTVTTTFILGGLIILWVERRQRPPRVESIDDVDWRLALKLGLFQTLAMIPGTSRSGATIIGGLLLGLSRRAATEFSFFLAIPTLFIATAYDLYKTGGILHAEDLSAFGIGFAAAFVSAFLAVRGLLRYIGGHDFTAFAWYRIAFGLVVLSTAHYGLVAWTG.

The next 6 helical transmembrane spans lie at 46 to 63 (LFEV…CWEY), 83 to 103 (FVLN…LAGK), 109 to 129 (LFNS…ILWV), 184 to 204 (ATEF…AYDL), 218 to 238 (AFGI…RGLL), and 249 to 269 (FAWY…YGLV).

The protein belongs to the UppP family.

The protein localises to the cell inner membrane. The catalysed reaction is di-trans,octa-cis-undecaprenyl diphosphate + H2O = di-trans,octa-cis-undecaprenyl phosphate + phosphate + H(+). Functionally, catalyzes the dephosphorylation of undecaprenyl diphosphate (UPP). Confers resistance to bacitracin. The chain is Undecaprenyl-diphosphatase from Methylococcus capsulatus (strain ATCC 33009 / NCIMB 11132 / Bath).